The following is a 521-amino-acid chain: NAD(P)H-quinone oxidoreductase subunit 2 (521 aa).

14 helical membrane-spanning segments follow: residues Ile16–Gly36, Trp43–Trp63, Leu80–Ile100, Leu110–Ala130, Leu133–Tyr153, Leu168–Leu188, Leu211–Val231, Pro245–Ile265, Trp279–Leu299, Met307–Thr327, Val335–Phe355, Leu379–Gly399, Ile401–Val421, and Val467–Phe487.

It belongs to the complex I subunit 2 family. In terms of assembly, NDH-1 can be composed of about 15 different subunits; different subcomplexes with different compositions have been identified which probably have different functions.

It is found in the cellular thylakoid membrane. It catalyses the reaction a plastoquinone + NADH + (n+1) H(+)(in) = a plastoquinol + NAD(+) + n H(+)(out). It carries out the reaction a plastoquinone + NADPH + (n+1) H(+)(in) = a plastoquinol + NADP(+) + n H(+)(out). Its function is as follows. NDH-1 shuttles electrons from an unknown electron donor, via FMN and iron-sulfur (Fe-S) centers, to quinones in the respiratory and/or the photosynthetic chain. The immediate electron acceptor for the enzyme in this species is believed to be plastoquinone. Couples the redox reaction to proton translocation, and thus conserves the redox energy in a proton gradient. Cyanobacterial NDH-1 also plays a role in inorganic carbon-concentration. In Crocosphaera subtropica (strain ATCC 51142 / BH68) (Cyanothece sp. (strain ATCC 51142)), this protein is NAD(P)H-quinone oxidoreductase subunit 2.